The following is a 440-amino-acid chain: Chromosomal replication initiator protein DnaA (440 aa).

A domain I, interacts with DnaA modulators region spans residues 1 to 74 (MNPSQILENL…VQSGNKAIIN (74 aa)). Residues 74 to 99 (NIQAQSAKQSNKSTKIDIAHIKAQST) form a domain II region. The domain III, AAA+ region stretch occupies residues 100-316 (ILNPSFTFDS…GIIISLNAYA (217 aa)). ATP-binding residues include glycine 146, glycine 148, lysine 149, and threonine 150. The tract at residues 317–440 (TILGQEITLE…KNKILVKSQS (124 aa)) is domain IV, binds dsDNA.

This sequence belongs to the DnaA family. In terms of assembly, oligomerizes as a right-handed, spiral filament on DNA at oriC.

Its subcellular location is the cytoplasm. Plays an essential role in the initiation and regulation of chromosomal replication. ATP-DnaA binds to the origin of replication (oriC) to initiate formation of the DNA replication initiation complex once per cell cycle. Binds the DnaA box (a 9 base pair repeat at the origin) and separates the double-stranded (ds)DNA. Forms a right-handed helical filament on oriC DNA; dsDNA binds to the exterior of the filament while single-stranded (ss)DNA is stabiized in the filament's interior. The ATP-DnaA-oriC complex binds and stabilizes one strand of the AT-rich DNA unwinding element (DUE), permitting loading of DNA polymerase. After initiation quickly degrades to an ADP-DnaA complex that is not apt for DNA replication. Binds acidic phospholipids. This chain is Chromosomal replication initiator protein DnaA, found in Campylobacter jejuni (strain RM1221).